The sequence spans 546 residues: Cyclic GMP-AMP synthase-like receptor (546 aa).

A compositionally biased stretch (polar residues) spans 1–10; that stretch reads MPVGSRQNRV. 2 disordered regions span residues 1–116 and 134–186; these read MPVG…CASR and AKQE…RLTN. Basic and acidic residues predominate over residues 35 to 45; sequence YTERKERKDVQ. Residues 69-80 are compositionally biased toward low complexity; sequence TSRTLRQTSQSR. Composition is skewed to basic and acidic residues over residues 82–95 and 145–174; these read EVLE…DCKK and KEGY…DKAT. Residues 175-186 are compositionally biased toward polar residues; it reads SHSTKGSFRLTN. Residues Ser243 and 255–257 contribute to the ATP site; that span reads EFD. Mg(2+)-binding residues include Glu255, Asp257, and Asp374. GTP-binding positions include Asp374 and 428-435; that span reads RTSFSLAE. ATP contacts are provided by residues 432-435, Lys455, and 470-474; these read SLAE and SYHLK.

This sequence belongs to the mab-21 family. Mg(2+) is required as a cofactor. Mn(2+) serves as cofactor.

It carries out the reaction GTP + ATP = 2',3'-cGAMP + 2 diphosphate. The catalysed reaction is GTP + ATP = pppGp(2'-5')A + diphosphate. It catalyses the reaction pppGp(2'-5')A = 2',3'-cGAMP + diphosphate. Functionally, nucleotidyltransferase that catalyzes the formation of cyclic GMP-AMP (2',3'-cGAMP) from ATP and GTP and plays a key role in innate immunity. Directly binds some unknown ligand, activating the nucleotidyltransferase activity, leading to synthesis of 2',3'-cGAMP, a second messenger that binds to and activates Sting, thereby triggering the immune response via activation of the NF-kappa-B transcription factor. The protein is Cyclic GMP-AMP synthase-like receptor of Exaiptasia diaphana (Tropical sea anemone).